Reading from the N-terminus, the 831-residue chain is MutS protein homolog 5 (831 aa).

The disordered stretch occupies residues M1–E43. G589–S596 contributes to the ATP binding site.

It belongs to the DNA mismatch repair MutS family. Heterooligomer of MSH4 and MSH5. Interacts with HJURP. Interacts with C7h12orf40/REDIC1.

Involved in DNA mismatch repair and meiotic recombination processes. Facilitates crossovers between homologs during meiosis. This is MutS protein homolog 5 (Msh5) from Rattus norvegicus (Rat).